Consider the following 616-residue polypeptide: Dihydroxy-acid dehydratase (616 aa).

Aspartate 81 contributes to the Mg(2+) binding site. [2Fe-2S] cluster is bound at residue cysteine 122. Mg(2+) contacts are provided by aspartate 123 and lysine 124. The residue at position 124 (lysine 124) is an N6-carboxylysine. Cysteine 195 contributes to the [2Fe-2S] cluster binding site. Residue glutamate 491 participates in Mg(2+) binding. Serine 517 (proton acceptor) is an active-site residue.

The protein belongs to the IlvD/Edd family. Homodimer. Requires [2Fe-2S] cluster as cofactor. The cofactor is Mg(2+).

It catalyses the reaction (2R)-2,3-dihydroxy-3-methylbutanoate = 3-methyl-2-oxobutanoate + H2O. The enzyme catalyses (2R,3R)-2,3-dihydroxy-3-methylpentanoate = (S)-3-methyl-2-oxopentanoate + H2O. The protein operates within amino-acid biosynthesis; L-isoleucine biosynthesis; L-isoleucine from 2-oxobutanoate: step 3/4. It participates in amino-acid biosynthesis; L-valine biosynthesis; L-valine from pyruvate: step 3/4. In terms of biological role, functions in the biosynthesis of branched-chain amino acids. Catalyzes the dehydration of (2R,3R)-2,3-dihydroxy-3-methylpentanoate (2,3-dihydroxy-3-methylvalerate) into 2-oxo-3-methylpentanoate (2-oxo-3-methylvalerate) and of (2R)-2,3-dihydroxy-3-methylbutanoate (2,3-dihydroxyisovalerate) into 2-oxo-3-methylbutanoate (2-oxoisovalerate), the penultimate precursor to L-isoleucine and L-valine, respectively. This Escherichia coli O157:H7 (strain EC4115 / EHEC) protein is Dihydroxy-acid dehydratase.